We begin with the raw amino-acid sequence, 1872 residues long: Ral GTPase-activating protein subunit alpha-2 (1872 aa).

The interval 350-370 is disordered; it reads DGAGSTEQDKSHSNSSTLSDR. Phosphoserine occurs at positions 373, 376, and 379. The segment covering 445-469 has biased composition (basic and acidic residues); it reads PDKKDVAQEDADKLGLSETDSKEAS. The segment at 445–481 is disordered; the sequence is PDKKDVAQEDADKLGLSETDSKEASSESSGHKRSSSW. At Ser486 the chain carries Phosphoserine. Residue Ser696 is modified to Phosphoserine; by PKB. Disordered stretches follow at residues 711–730 and 758–813; these read FRSA…NTVR and QQVP…GITM. Thr715 carries the phosphothreonine; by PKB modification. Composition is skewed to polar residues over residues 758–768 and 775–795; these read QQVPRSSSTSD and SDSS…SEPK. A compositionally biased stretch (basic and acidic residues) spans 796–810; that stretch reads SVQESKGHVTHEHEG. 2 positions are modified to phosphoserine: Ser819 and Ser820. The interval 831–851 is disordered; sequence QQAHGRCRQRQTSESTGSDTV. Residues 840-849 show a composition bias toward polar residues; sequence RQTSESTGSD. Phosphoserine is present on Ser1592. The Rap-GAP domain maps to 1634–1842; it reads LKNLDSRQCR…EERALYLEAI (209 aa).

As to quaternary structure, component of the heterodimeric RalGAP2 complex with RALGAPB. Heterodimerization is required for activity. In terms of tissue distribution, abundantly expressed in testis, pancreas, lung, thymus, brown fat, and white fat.

Its subcellular location is the cytoplasm. Its function is as follows. Catalytic subunit of the heterodimeric RalGAP2 complex which acts as a GTPase activator for the Ras-like small GTPases RALA and RALB. This Mus musculus (Mouse) protein is Ral GTPase-activating protein subunit alpha-2 (Ralgapa2).